The following is a 173-amino-acid chain: Photosystem I assembly protein Ycf3 (173 aa).

TPR repeat units lie at residues 35–68, 72–105, and 120–153; these read AFAY…EEDP, SFIL…NPKM, and GQRS…APNN.

It belongs to the Ycf3 family.

The protein resides in the cellular thylakoid membrane. Its function is as follows. Essential for the assembly of the photosystem I (PSI) complex. May act as a chaperone-like factor to guide the assembly of the PSI subunits. The chain is Photosystem I assembly protein Ycf3 from Synechococcus elongatus (strain ATCC 33912 / PCC 7942 / FACHB-805) (Anacystis nidulans R2).